A 193-amino-acid polypeptide reads, in one-letter code: Xanthine phosphoribosyltransferase (193 aa).

Residues leucine 20 and threonine 27 each contribute to the xanthine site. 128-132 serves as a coordination point for 5-phospho-alpha-D-ribose 1-diphosphate; the sequence is ANGQA. A xanthine-binding site is contributed by lysine 156.

Belongs to the purine/pyrimidine phosphoribosyltransferase family. Xpt subfamily. In terms of assembly, homodimer.

Its subcellular location is the cytoplasm. It catalyses the reaction XMP + diphosphate = xanthine + 5-phospho-alpha-D-ribose 1-diphosphate. The protein operates within purine metabolism; XMP biosynthesis via salvage pathway; XMP from xanthine: step 1/1. Its function is as follows. Converts the preformed base xanthine, a product of nucleic acid breakdown, to xanthosine 5'-monophosphate (XMP), so it can be reused for RNA or DNA synthesis. This Streptococcus agalactiae serotype Ia (strain ATCC 27591 / A909 / CDC SS700) protein is Xanthine phosphoribosyltransferase.